The chain runs to 429 residues: Histidine--tRNA ligase (429 aa).

It belongs to the class-II aminoacyl-tRNA synthetase family. In terms of assembly, homodimer.

Its subcellular location is the cytoplasm. The catalysed reaction is tRNA(His) + L-histidine + ATP = L-histidyl-tRNA(His) + AMP + diphosphate + H(+). This Acidovorax ebreus (strain TPSY) (Diaphorobacter sp. (strain TPSY)) protein is Histidine--tRNA ligase.